Here is a 155-residue protein sequence, read N- to C-terminus: Ribonuclease H (155 aa).

The RNase H type-1 domain occupies 4-145; sequence ETKVIEIYTD…ADALARKAIT (142 aa). Asp-13, Glu-51, Asp-73, and Asp-137 together coordinate Mg(2+).

Belongs to the RNase H family. Monomer. Mg(2+) serves as cofactor.

It is found in the cytoplasm. It carries out the reaction Endonucleolytic cleavage to 5'-phosphomonoester.. Functionally, endonuclease that specifically degrades the RNA of RNA-DNA hybrids. The chain is Ribonuclease H from Bartonella bacilliformis (strain ATCC 35685 / KC583 / Herrer 020/F12,63).